Consider the following 832-residue polypeptide: Putative beta-glucosidase (832 aa).

The active site involves D225. In terms of domain architecture, PA14 spans 397–556 (TGKHGYVAKF…DPETEIDYAV (160 aa)).

This sequence belongs to the glycosyl hydrolase 3 family.

The protein resides in the cytoplasm. It carries out the reaction Hydrolysis of terminal, non-reducing beta-D-glucosyl residues with release of beta-D-glucose.. This is Putative beta-glucosidase from Schizosaccharomyces pombe (strain 972 / ATCC 24843) (Fission yeast).